The sequence spans 335 residues: 3-dehydroquinate synthase (335 aa).

NAD(+) is bound by residues Asp-56–Lys-61, Gly-90–Asp-94, Thr-114–Thr-115, Lys-127, Lys-135, and Phe-153–Thr-156. Zn(2+)-binding residues include Glu-168, His-227, and His-243.

The protein belongs to the sugar phosphate cyclases superfamily. Dehydroquinate synthase family. NAD(+) is required as a cofactor. Co(2+) serves as cofactor. It depends on Zn(2+) as a cofactor.

It is found in the cytoplasm. It catalyses the reaction 7-phospho-2-dehydro-3-deoxy-D-arabino-heptonate = 3-dehydroquinate + phosphate. It functions in the pathway metabolic intermediate biosynthesis; chorismate biosynthesis; chorismate from D-erythrose 4-phosphate and phosphoenolpyruvate: step 2/7. Catalyzes the conversion of 3-deoxy-D-arabino-heptulosonate 7-phosphate (DAHP) to dehydroquinate (DHQ). This is 3-dehydroquinate synthase from Pyrococcus furiosus (strain ATCC 43587 / DSM 3638 / JCM 8422 / Vc1).